A 282-amino-acid chain; its full sequence is Bis(5'-nucleosyl)-tetraphosphatase, symmetrical (282 aa).

It belongs to the Ap4A hydrolase family.

It carries out the reaction P(1),P(4)-bis(5'-adenosyl) tetraphosphate + H2O = 2 ADP + 2 H(+). Its function is as follows. Hydrolyzes diadenosine 5',5'''-P1,P4-tetraphosphate to yield ADP. This Escherichia fergusonii (strain ATCC 35469 / DSM 13698 / CCUG 18766 / IAM 14443 / JCM 21226 / LMG 7866 / NBRC 102419 / NCTC 12128 / CDC 0568-73) protein is Bis(5'-nucleosyl)-tetraphosphatase, symmetrical.